We begin with the raw amino-acid sequence, 1008 residues long: GGISVPGPMGPSGPRGLPGPPGPGPQGFQGPPGEPGEPGSGPMGPRGPPGPPGKNGDDGEAGKPGRPGERGPPGPQGARGLPGTAGLPGMKGHRGFSGLDGAKGDAGPAGPKGEPGSPGENGAPGQMGPRGLPGERGRPGASGPAGARGNDGAAGAAGPPGPTGPAGPPGFPGAVGAKGEAGPQGARGSEGPQGVRGEPGPPGPAGAAGPAGNPGADGQPGAKGANGAPGIAGAPGFPGRGPSGPQGPSGPGPKGNSGEPGAPGSKGDTGAKGEPGPTGIQGPPGPAGEEGKRGARGEPGPTGLPGPPGERGGPGSRGFPGADGVAGPKGPAGERGSPGPAGPKGSPGEAGRPGEAGLPGAKGLTGSPGSPGPDGKTGPPGPAGQDGRPGPPGPPGARGQAGVMGFPGPKGAAGEPGKAGERGVPGPPGAVGPAGKDGEAGAQGPPGPAGPAGERGEQGPAGPGFQGLPGPAGPPGEAGKPGEQGVPGDLGAPGPSGARGERGFPGERGVQGPPGPAGPRGAPGNDGAKGDAGAPGAPGSQGAPGLQGMPGERGAAGLPGPKGDRGDAGPKGADGAPGKDGVRGLTGPIGPPGPAGAPGDKGESGPSGPAGPTGARGAPGDRGEPGPPGPAGFAGPPGADGQPGAKGEPGDAGAKGDAGPPGPAGPTGPPGPIGNVGAPGPKGARGSAGPPGATGFPGAAGRVGPPGPSGNAGPGPPGPVGKEGGKGPRGETGPAGRPGEVGPPGPPGPGEKGSPGADGPAGAPGTPGPQGIGQRGVVGLPGQRGERGFPGLPGPSGEPGKQGPSGSSGERGPPGPVGPPGLAGPPGESGREGSPGAEGSPGRDGSPGPKGDRGETGPGPPGAPGAPGAPGPVGPAGKSGDRGETGPAGPAGPAGPAGARGPAGPQGPRGDKGETGEQGDRGIKGHRGFSGLQGPAGPPGSPGEQGPSGASGPAGPRGPPGSAGSPGKDGLNGLPGPIGPPGPRGRTGDAGPVGPPGPPGPPGPPGPP.

The segment at 1 to 1008 (GGISVPGPMG…PGPPGPPGPP (1008 aa)) is disordered. 4-hydroxyproline is present on residues P18, P21, P23, P32, P35, P38, P52, P67, P73, P82, and P88. The segment covering 55-69 (NGDDGEAGKPGRPGE) has biased composition (basic and acidic residues). A 5-hydroxylysine; alternate modification is found at K91. K91 carries O-linked (Gal...) hydroxylysine; alternate glycosylation. The residue at position 97 (S97) is a Phosphoserine. The segment covering 105-121 (DAGPAGPKGEPGSPGEN) has biased composition (low complexity). 15 positions are modified to 4-hydroxyproline: P115, P118, P124, P133, P139, P160, P169, P172, P199, P202, P214, P220, P229, P235, and P238. Over residues 139–157 (PGASGPAGARGNDGAAGAA) the composition is skewed to low complexity. Residues 159-171 (PPGPTGPAGPPGF) show a composition bias toward pro residues. The segment covering 205 to 235 (AGAAGPAGNPGADGQPGAKGANGAPGIAGAP) has biased composition (low complexity). Gly residues predominate over residues 236–255 (GFPGRGPSGPQGPSGPGPKG). At K254 the chain carries 5-hydroxylysine. 8 positions are modified to 4-hydroxyproline: P260, P263, P275, P284, P299, P305, P314, and P320. Residues 309 to 318 (GERGGPGSRG) show a composition bias toward gly residues. K329 is subject to 5-hydroxylysine. 28 positions are modified to 4-hydroxyproline: P338, P347, P353, P359, P368, P371, P380, P389, P395, P407, P416, P425, P428, P446, P463, P469, P475, P481, P487, P493, P505, P514, P523, P535, P538, P544, P550, and P559. Residues 362 to 388 (KGLTGSPGSPGPDGKTGPPGPAGQDGR) show a composition bias toward low complexity. Positions 397–416 (ARGQAGVMGFPGPKGAAGEP) are enriched in low complexity. The segment covering 475–484 (PGEAGKPGEQ) has biased composition (low complexity). Residues 519-547 (PRGAPGNDGAKGDAGAPGAPGSQGAPGLQ) are compositionally biased toward low complexity. K571 is subject to 5-hydroxylysine. P577, P592, and P598 each carry 4-hydroxyproline. The span at 604–618 (SGPSGPAGPTGARGA) shows a compositional bias: low complexity. S607 carries the post-translational modification Phosphoserine. 4-hydroxyproline occurs at positions 619, 625, 628, 637, 643, 661, 670, and 679. Residues 631–658 (AGFAGPPGADGQPGAKGEPGDAGAKGDA) are compositionally biased toward low complexity. The segment covering 660 to 672 (PPGPAGPTGPPGP) has biased composition (pro residues). 5-hydroxylysine is present on K682. Positions 687–703 (SAGPPGATGFPGAAGRV) are enriched in low complexity. 4-hydroxyproline is present on residues P691 and P697. 3-hydroxyproline is present on P705. 4-hydroxyproline occurs at positions 706, 717, 738, 747, 755, 764, 781, 790, 793, 799, 814, 820, 826, 835, and 841. The segment covering 731 to 740 (ETGPAGRPGE) has biased composition (low complexity). Positions 752–764 (KGSPGADGPAGAP) are enriched in low complexity. A compositionally biased stretch (pro residues) spans 813–823 (PPGPVGPPGLA). Residues 825 to 840 (PPGESGREGSPGAEGS) are compositionally biased toward low complexity. K850 carries the 5-hydroxylysine modification. The segment covering 858–873 (PGPPGAPGAPGAPGPV) has biased composition (pro residues). 3 positions are modified to 4-hydroxyproline: P861, P864, and P867. Low complexity predominate over residues 894 to 908 (AGPAGARGPAGPQGP). The segment covering 909 to 923 (RGDKGETGEQGDRGI) has biased composition (basic and acidic residues). K912 carries the 5-hydroxylysine modification. 5-hydroxylysine; alternate is present on K924. Residue K924 is glycosylated (O-linked (Gal...) hydroxylysine; alternate). P939, P942, P960, and P975 each carry 4-hydroxyproline. A compositionally biased stretch (low complexity) spans 942–975 (PGEQGPSGASGPAGPRGPPGSAGSPGKDGLNGLP). 3-hydroxyproline is present on P980. P981 is modified (4-hydroxyproline). The span at 993-1008 (VGPPGPPGPPGPPGPP) shows a compositional bias: pro residues. Residue P995 is modified to 3-hydroxyproline. P996 carries the post-translational modification 4-hydroxyproline. 3-hydroxyproline is present on P998. P999 is modified (4-hydroxyproline). P1001 is modified (3-hydroxyproline). A 4-hydroxyproline mark is found at P1002, P1005, and P1008.

The protein belongs to the fibrillar collagen family. As to quaternary structure, trimers of one alpha 2(I) and two alpha 1(I) chains. Contains mostly 4-hydroxyproline. Proline residues at the third position of the tripeptide repeating unit (G-X-Y) are hydroxylated in some or all of the chains. In terms of processing, contains 3-hydroxyproline at a few sites. This modification occurs on the first proline residue in the sequence motif Gly-Pro-Hyp, where Hyp is 4-hydroxyproline. Post-translationally, lysine residues at the third position of the tripeptide repeating unit (G-X-Y) are 5-hydroxylated in some or all of the chains. O-glycosylated on hydroxylated lysine residues. The O-linked glycan consists of a Glc-Gal disaccharide. Expressed in bones.

The protein localises to the secreted. The protein resides in the extracellular space. Its subcellular location is the extracellular matrix. Its function is as follows. Type I collagen is a member of group I collagen (fibrillar forming collagen). The chain is Collagen alpha-1(I) chain from Paramylodon harlani (Harlan's ground sloth).